The following is a 637-amino-acid chain: 3D-(3,5/4)-trihydroxycyclohexane-1,2-dione hydrolase (637 aa).

Glutamate 66 contributes to the thiamine diphosphate binding site. The segment at 442-522 (SLPGDLQRLW…INVLLFDNSG (81 aa)) is thiamine pyrophosphate binding. Residues aspartate 493 and asparagine 520 each coordinate Mg(2+).

This sequence belongs to the TPP enzyme family. The cofactor is Mg(2+). Thiamine diphosphate serves as cofactor.

It catalyses the reaction 3D-3,5/4-trihydroxycyclohexane-1,2-dione + H2O = 5-deoxy-D-glucuronate + H(+). It functions in the pathway polyol metabolism; myo-inositol degradation into acetyl-CoA; acetyl-CoA from myo-inositol: step 3/7. Its function is as follows. Involved in the cleavage of the C1-C2 bond of 3D-(3,5/4)-trihydroxycyclohexane-1,2-dione (THcHDO) to yield 5-deoxy-glucuronate (5DG). This Bacillus velezensis (strain DSM 23117 / BGSC 10A6 / LMG 26770 / FZB42) (Bacillus amyloliquefaciens subsp. plantarum) protein is 3D-(3,5/4)-trihydroxycyclohexane-1,2-dione hydrolase.